Here is a 337-residue protein sequence, read N- to C-terminus: uncharacterized protein (337 aa).

In terms of domain architecture, MurNAc-LAA spans 3 to 174; that stretch reads IAVRGGHNFK…IGKLIAEAIN (172 aa).

The protein to C.perfringens pIP404 ORF10.

This is an uncharacterized protein from Clostridium perfringens (strain 13 / Type A).